Here is an 89-residue protein sequence, read N- to C-terminus: Small ribosomal subunit protein bS16 (89 aa).

Belongs to the bacterial ribosomal protein bS16 family.

In Gloeobacter violaceus (strain ATCC 29082 / PCC 7421), this protein is Small ribosomal subunit protein bS16.